A 315-amino-acid polypeptide reads, in one-letter code: Probable cell division protein WhiA (315 aa).

A DNA-binding region (H-T-H motif) is located at residues 275–309; sequence TLKELGEMVSSGTVSKSGVNHRLRKIDEIADALRR.

It belongs to the WhiA family.

Its function is as follows. Involved in cell division and chromosome segregation. This Lysinibacillus sphaericus (strain C3-41) protein is Probable cell division protein WhiA.